The following is a 237-amino-acid chain: Ribosomal RNA small subunit methyltransferase G (237 aa).

S-adenosyl-L-methionine is bound by residues Gly78, Phe83, 129-130 (AE), and Arg148.

This sequence belongs to the methyltransferase superfamily. RNA methyltransferase RsmG family.

It localises to the cytoplasm. Functionally, specifically methylates the N7 position of a guanine in 16S rRNA. This chain is Ribosomal RNA small subunit methyltransferase G, found in Streptococcus pyogenes serotype M3 (strain ATCC BAA-595 / MGAS315).